A 170-amino-acid chain; its full sequence is Probable calcium-binding protein CML27 (170 aa).

The residue at position 2 (A2) is an N-acetylalanine. EF-hand domains lie at 19–54, 55–85, 88–123, and 136–159; these read ANPE…MGTS, YTET…TLCR, SSAA…LGMS, and VDAD…SSLL. Residues D32, N34, D36, K38, E43, D68, D70, D72, Y74, E79, D101, D103, N105, E112, D137, D139, D141, N143, and E148 each coordinate Ca(2+).

Its function is as follows. Potential calcium sensor. This is Probable calcium-binding protein CML27 (CML27) from Arabidopsis thaliana (Mouse-ear cress).